We begin with the raw amino-acid sequence, 212 residues long: dITP/XTP pyrophosphatase (212 aa).

7–12 (SNNAKK) lines the substrate pocket. The Mg(2+) site is built by E39 and D68. The Proton acceptor role is filled by D68. Substrate is bound by residues S69, 165–168 (FGYD), K188, and 193–194 (HR).

Belongs to the HAM1 NTPase family. Homodimer. Requires Mg(2+) as cofactor.

The enzyme catalyses XTP + H2O = XMP + diphosphate + H(+). It catalyses the reaction dITP + H2O = dIMP + diphosphate + H(+). It carries out the reaction ITP + H2O = IMP + diphosphate + H(+). Its function is as follows. Pyrophosphatase that catalyzes the hydrolysis of nucleoside triphosphates to their monophosphate derivatives, with a high preference for the non-canonical purine nucleotides XTP (xanthosine triphosphate), dITP (deoxyinosine triphosphate) and ITP. Seems to function as a house-cleaning enzyme that removes non-canonical purine nucleotides from the nucleotide pool, thus preventing their incorporation into DNA/RNA and avoiding chromosomal lesions. The protein is dITP/XTP pyrophosphatase of Leptothrix cholodnii (strain ATCC 51168 / LMG 8142 / SP-6) (Leptothrix discophora (strain SP-6)).